Here is a 396-residue protein sequence, read N- to C-terminus: RNA binding protein fox-1 homolog 1 (396 aa).

Residues 1 to 119 (MNCEREQLRG…ESKSQPKRLH (119 aa)) are disordered. Residues 67 to 86 (PPTQTHSEQSADTSAQTVSG) are compositionally biased toward polar residues. Low complexity predominate over residues 87-98 (TATQTDDAAPTD). Positions 99–112 (GQPQTQPSENTESK) are enriched in polar residues. In terms of domain architecture, RRM spans 116–192 (KRLHVSNIPF…RKIEVNNATA (77 aa)). 2 positions are modified to asymmetric dimethylarginine: Arg316 and Ala337. An Omega-N-methylarginine modification is found at Arg387.

In terms of assembly, binds to the C-terminus of ATXN2. Detected in brain (at protein level). Detected in heart, brain, neurons, skeletal muscle and embryo.

The protein localises to the nucleus. It is found in the cytoplasm. In terms of biological role, RNA-binding protein that regulates alternative splicing events by binding to 5'-UGCAUGU-3' elements. Prevents binding of U2AF2 to the 3'-splice site. Regulates alternative splicing of tissue-specific exons and of differentially spliced exons during erythropoiesis. The sequence is that of RNA binding protein fox-1 homolog 1 (Rbfox1) from Mus musculus (Mouse).